Here is a 126-residue protein sequence, read N- to C-terminus: Glycine cleavage system H protein (126 aa).

The 83-residue stretch at 21-103 folds into the Lipoyl-binding domain; the sequence is TVTVGISDHA…YESGWIARIK (83 aa). Lys-62 bears the N6-lipoyllysine mark.

Belongs to the GcvH family. The glycine cleavage system is composed of four proteins: P, T, L and H. (R)-lipoate serves as cofactor.

Functionally, the glycine cleavage system catalyzes the degradation of glycine. The H protein shuttles the methylamine group of glycine from the P protein to the T protein. The sequence is that of Glycine cleavage system H protein from Aliivibrio fischeri (strain MJ11) (Vibrio fischeri).